Reading from the N-terminus, the 448-residue chain is Homogentisate 1,2-dioxygenase (448 aa).

His-303 acts as the Proton acceptor in catalysis. His-346 and Glu-352 together coordinate Fe cation. Homogentisate is bound by residues Tyr-361 and His-382. His-382 lines the Fe cation pocket.

This sequence belongs to the homogentisate dioxygenase family. As to quaternary structure, hexamer; dimer of trimers. Fe cation serves as cofactor.

It carries out the reaction homogentisate + O2 = 4-maleylacetoacetate + H(+). The protein operates within amino-acid degradation; L-phenylalanine degradation; acetoacetate and fumarate from L-phenylalanine: step 4/6. Functionally, involved in the catabolism of homogentisate (2,5-dihydroxyphenylacetate or 2,5-OH-PhAc), a central intermediate in the degradation of phenylalanine and tyrosine. Catalyzes the oxidative ring cleavage of the aromatic ring of homogentisate to yield maleylacetoacetate. This is Homogentisate 1,2-dioxygenase from Bradyrhizobium diazoefficiens (strain JCM 10833 / BCRC 13528 / IAM 13628 / NBRC 14792 / USDA 110).